Reading from the N-terminus, the 342-residue chain is Glucokinase (342 aa).

Residue 7–12 participates in ATP binding; the sequence is GDIGGT.

It belongs to the bacterial glucokinase family.

The protein localises to the cytoplasm. It carries out the reaction D-glucose + ATP = D-glucose 6-phosphate + ADP + H(+). The polypeptide is Glucokinase (Nostoc sp. (strain PCC 7120 / SAG 25.82 / UTEX 2576)).